The primary structure comprises 214 residues: Cell division protein DamX (214 aa).

Composition is skewed to polar residues over residues 1–14 and 43–53; these read GSGTPTEAQTQPQQ and QGMTGAASTLP. A disordered region spans residues 1-133; that stretch reads GSGTPTEAQT…SVQSAPGSHY (133 aa). The helical transmembrane segment at 44–65 threads the bilayer; the sequence is GMTGAASTLPTAPATVMSGAAA. Composition is skewed to low complexity over residues 78 to 97 and 110 to 131; these read QQHKTPAKTAAAKPTATQHK and SSTAKAGAVASSGSSVQSAPGS. Positions 127–204 constitute an SPOR domain; the sequence is SAPGSHYTLQ…VQAKKPWVRP (78 aa).

It belongs to the DamX family.

Its subcellular location is the cell inner membrane. In terms of biological role, non-essential cell division protein. This chain is Cell division protein DamX, found in Serratia marcescens.